The primary structure comprises 885 residues: Alanine--tRNA ligase (885 aa).

Histidine 571, histidine 575, cysteine 674, and histidine 678 together coordinate Zn(2+).

The protein belongs to the class-II aminoacyl-tRNA synthetase family. Requires Zn(2+) as cofactor.

It is found in the cytoplasm. It carries out the reaction tRNA(Ala) + L-alanine + ATP = L-alanyl-tRNA(Ala) + AMP + diphosphate. Catalyzes the attachment of alanine to tRNA(Ala) in a two-step reaction: alanine is first activated by ATP to form Ala-AMP and then transferred to the acceptor end of tRNA(Ala). Also edits incorrectly charged Ser-tRNA(Ala) and Gly-tRNA(Ala) via its editing domain. The polypeptide is Alanine--tRNA ligase (Clavibacter sepedonicus (Clavibacter michiganensis subsp. sepedonicus)).